Consider the following 92-residue polypeptide: uncharacterized protein (92 aa).

This is an uncharacterized protein from Saccharomyces cerevisiae (strain ATCC 204508 / S288c) (Baker's yeast).